Consider the following 478-residue polypeptide: Cysteine--tRNA ligase (478 aa).

Residue C37 coordinates Zn(2+). The 'HIGH' region motif lies at 39–49 (PTVYHYAHIGN). C224, H249, and E253 together coordinate Zn(2+). The 'KMSKS' region signature appears at 281 to 285 (KMSKS). K284 serves as a coordination point for ATP.

It belongs to the class-I aminoacyl-tRNA synthetase family. In terms of assembly, monomer. It depends on Zn(2+) as a cofactor.

The protein localises to the cytoplasm. The catalysed reaction is tRNA(Cys) + L-cysteine + ATP = L-cysteinyl-tRNA(Cys) + AMP + diphosphate. This chain is Cysteine--tRNA ligase, found in Protochlamydia amoebophila (strain UWE25).